The sequence spans 551 residues: Dihydroxy-acid dehydratase (551 aa).

Mg(2+) is bound at residue Asp78. A [2Fe-2S] cluster-binding site is contributed by Cys119. Mg(2+) is bound by residues Asp120 and Lys121. Lys121 is modified (N6-carboxylysine). Cys191 lines the [2Fe-2S] cluster pocket. Glu441 is a binding site for Mg(2+). Ser467 acts as the Proton acceptor in catalysis.

This sequence belongs to the IlvD/Edd family. As to quaternary structure, homodimer. [2Fe-2S] cluster serves as cofactor. It depends on Mg(2+) as a cofactor.

It carries out the reaction (2R)-2,3-dihydroxy-3-methylbutanoate = 3-methyl-2-oxobutanoate + H2O. The enzyme catalyses (2R,3R)-2,3-dihydroxy-3-methylpentanoate = (S)-3-methyl-2-oxopentanoate + H2O. Its pathway is amino-acid biosynthesis; L-isoleucine biosynthesis; L-isoleucine from 2-oxobutanoate: step 3/4. It participates in amino-acid biosynthesis; L-valine biosynthesis; L-valine from pyruvate: step 3/4. Functionally, functions in the biosynthesis of branched-chain amino acids. Catalyzes the dehydration of (2R,3R)-2,3-dihydroxy-3-methylpentanoate (2,3-dihydroxy-3-methylvalerate) into 2-oxo-3-methylpentanoate (2-oxo-3-methylvalerate) and of (2R)-2,3-dihydroxy-3-methylbutanoate (2,3-dihydroxyisovalerate) into 2-oxo-3-methylbutanoate (2-oxoisovalerate), the penultimate precursor to L-isoleucine and L-valine, respectively. In Pyrococcus abyssi (strain GE5 / Orsay), this protein is Dihydroxy-acid dehydratase.